The primary structure comprises 193 residues: Recombination protein RecR (193 aa).

The C4-type zinc finger occupies 61-76 (CASCNALSESEICEIC). The Toprim domain maps to 84–170 (SQLCMVLHPR…TFTKIAQGVP (87 aa)).

It belongs to the RecR family.

Its function is as follows. May play a role in DNA repair. It seems to be involved in an RecBC-independent recombinational process of DNA repair. It may act with RecF and RecO. The polypeptide is Recombination protein RecR (Helicobacter pylori (strain Shi470)).